Consider the following 465-residue polypeptide: Kynureninase (465 aa).

Pyridoxal 5'-phosphate is bound by residues Leu116, Thr117, 144 to 147 (FPSD), Asp231, His234, and Tyr256. Lys257 is subject to N6-(pyridoxal phosphate)lysine. Pyridoxal 5'-phosphate is bound by residues Trp291 and Asn319.

It belongs to the kynureninase family. Homodimer. It depends on pyridoxal 5'-phosphate as a cofactor.

It localises to the cytoplasm. It carries out the reaction L-kynurenine + H2O = anthranilate + L-alanine + H(+). The enzyme catalyses 3-hydroxy-L-kynurenine + H2O = 3-hydroxyanthranilate + L-alanine + H(+). The protein operates within amino-acid degradation; L-kynurenine degradation; L-alanine and anthranilate from L-kynurenine: step 1/1. It participates in cofactor biosynthesis; NAD(+) biosynthesis; quinolinate from L-kynurenine: step 2/3. Functionally, catalyzes the cleavage of L-kynurenine (L-Kyn) and L-3-hydroxykynurenine (L-3OHKyn) into anthranilic acid (AA) and 3-hydroxyanthranilic acid (3-OHAA), respectively. The chain is Kynureninase from Scheffersomyces stipitis (strain ATCC 58785 / CBS 6054 / NBRC 10063 / NRRL Y-11545) (Yeast).